Reading from the N-terminus, the 376-residue chain is tRNA-specific 2-thiouridylase MnmA (376 aa).

Residues 17 to 24 (GMSGGVDS) and Met43 each bind ATP. The tract at residues 103–105 (NPD) is interaction with target base in tRNA. The active-site Nucleophile is Cys108. Cys108 and Cys204 form a disulfide bridge. Gly132 lines the ATP pocket. Positions 154-156 (KDQ) are interaction with tRNA. The active-site Cysteine persulfide intermediate is the Cys204. Positions 316 to 317 (RY) are interaction with tRNA.

The protein belongs to the MnmA/TRMU family.

It localises to the cytoplasm. The enzyme catalyses S-sulfanyl-L-cysteinyl-[protein] + uridine(34) in tRNA + AH2 + ATP = 2-thiouridine(34) in tRNA + L-cysteinyl-[protein] + A + AMP + diphosphate + H(+). Its function is as follows. Catalyzes the 2-thiolation of uridine at the wobble position (U34) of tRNA, leading to the formation of s(2)U34. In Pseudomonas syringae pv. syringae (strain B728a), this protein is tRNA-specific 2-thiouridylase MnmA.